The chain runs to 156 residues: Cyanate hydratase (156 aa).

Residues Arg96, Glu99, and Ser122 contribute to the active site.

Belongs to the cyanase family.

The catalysed reaction is cyanate + hydrogencarbonate + 3 H(+) = NH4(+) + 2 CO2. Catalyzes the reaction of cyanate with bicarbonate to produce ammonia and carbon dioxide. In Pseudomonas paraeruginosa (strain DSM 24068 / PA7) (Pseudomonas aeruginosa (strain PA7)), this protein is Cyanate hydratase.